The following is a 61-amino-acid chain: uncharacterized protein (61 aa).

Residues 23-61 (VPTKWQDYKKPGPNQKYTSDGKKRRRIRRSQKSILGVRS) are disordered. The span at 44–53 (KKRRRIRRSQ) shows a compositional bias: basic residues.

This is an uncharacterized protein from Archaeoglobus fulgidus (strain ATCC 49558 / DSM 4304 / JCM 9628 / NBRC 100126 / VC-16).